The primary structure comprises 224 residues: Probable GTP-binding protein EngB (224 aa).

One can recognise an EngB-type G domain in the interval 31 to 205; the sequence is IGVEIAFAGR…LSILNDWCHP (175 aa). GTP-binding positions include 39–46, 66–70, 84–87, 151–154, and 184–186; these read GRSNAGKS, GRTQL, DLPG, TKSD, and LSS. Ser46 and Thr68 together coordinate Mg(2+).

This sequence belongs to the TRAFAC class TrmE-Era-EngA-EngB-Septin-like GTPase superfamily. EngB GTPase family. It depends on Mg(2+) as a cofactor.

In terms of biological role, necessary for normal cell division and for the maintenance of normal septation. In Shewanella frigidimarina (strain NCIMB 400), this protein is Probable GTP-binding protein EngB.